The sequence spans 61 residues: Photosystem II reaction center protein K (61 aa).

Positions 1-24 (MLNIFSLICICLNSALYSSNFFFA) are excised as a propeptide. A helical membrane pass occupies residues 40-60 (MPVIPLFFFLLAFVWQAAVSF).

The protein belongs to the PsbK family. PSII is composed of 1 copy each of membrane proteins PsbA, PsbB, PsbC, PsbD, PsbE, PsbF, PsbH, PsbI, PsbJ, PsbK, PsbL, PsbM, PsbT, PsbX, PsbY, PsbZ, Psb30/Ycf12, at least 3 peripheral proteins of the oxygen-evolving complex and a large number of cofactors. It forms dimeric complexes.

It localises to the plastid. The protein localises to the chloroplast thylakoid membrane. In terms of biological role, one of the components of the core complex of photosystem II (PSII). PSII is a light-driven water:plastoquinone oxidoreductase that uses light energy to abstract electrons from H(2)O, generating O(2) and a proton gradient subsequently used for ATP formation. It consists of a core antenna complex that captures photons, and an electron transfer chain that converts photonic excitation into a charge separation. The sequence is that of Photosystem II reaction center protein K from Vitis vinifera (Grape).